Here is a 585-residue protein sequence, read N- to C-terminus: Arginine--tRNA ligase (585 aa).

The short motif at 127 to 137 (PNTNKPLHVGH) is the 'HIGH' region element.

Belongs to the class-I aminoacyl-tRNA synthetase family. As to quaternary structure, monomer.

The protein localises to the cytoplasm. The enzyme catalyses tRNA(Arg) + L-arginine + ATP = L-arginyl-tRNA(Arg) + AMP + diphosphate. This is Arginine--tRNA ligase from Borrelia garinii subsp. bavariensis (strain ATCC BAA-2496 / DSM 23469 / PBi) (Borreliella bavariensis).